The chain runs to 55 residues: Large ribosomal subunit protein bL33 (55 aa).

The protein belongs to the bacterial ribosomal protein bL33 family.

The protein is Large ribosomal subunit protein bL33 of Parvibaculum lavamentivorans (strain DS-1 / DSM 13023 / NCIMB 13966).